Reading from the N-terminus, the 362-residue chain is Prostaglandin F2-alpha receptor (362 aa).

Residues 1-31 (MSTNNSVQPVSPASELLSNTTCQLEEDLSIS) lie on the Extracellular side of the membrane. Asparagine 4 and asparagine 19 each carry an N-linked (GlcNAc...) asparagine glycan. The chain crosses the membrane as a helical span at residues 32–54 (FSIIFMTVGILSNSLAIAILMKA). Over 55-69 (YQRFRQKYKSSFLLL) the chain is Cytoplasmic. Residues 70-90 (ASALVITDFFGHLINGTIAVF) form a helical membrane-spanning segment. Over 91–109 (VYASDKDWIYFDKSNILCS) the chain is Extracellular. Cysteine 108 and cysteine 186 are disulfide-bonded. The chain crosses the membrane as a helical span at residues 110–131 (IFGICMVFSGLCPLFLGSLMAI). The Cytoplasmic portion of the chain corresponds to 132 to 152 (ERCIGVTKPIFHSTKITTKHV). Residues 153–175 (KMMLSGVCFFAVFVALLPILGHR) traverse the membrane as a helical segment. At 176-198 (DYKIQASRTWCFYKTDQIKDWED) the chain is on the extracellular side. Residues 199-224 (RFYLLLFAFLGLLALGISFVCNAITG) traverse the membrane as a helical segment. Over 225–250 (ISLLKVKFRSQQHRQGRSHHFEMVIQ) the chain is Cytoplasmic. The chain crosses the membrane as a helical span at residues 251–267 (LLGIMCVSCICWSPFLV). The Extracellular segment spans residues 268–285 (TMASIGMNIQDFKDSCER). A helical membrane pass occupies residues 286–307 (TLFTLRMATWNQILDPWVYILL). Topologically, residues 308–362 (RKAVLRNLYVCTRRCCGVHVISLHVWELSSIKNSLKVAAISDLPVTEKVTQQTST) are cytoplasmic.

The protein belongs to the G-protein coupled receptor 1 family.

The protein localises to the cell membrane. Receptor for prostaglandin F2-alpha (PGF2-alpha). The activity of this receptor is mediated by G proteins which activate a phosphatidylinositol-calcium second messenger system. Initiates luteolysis in the corpus luteum. In Ovis aries (Sheep), this protein is Prostaglandin F2-alpha receptor (PTGFR).